A 447-amino-acid polypeptide reads, in one-letter code: Chromosomal replication initiator protein DnaA (447 aa).

Residues 1–70 (MQDFWSKAMD…EEILSEQLGE (70 aa)) form a domain I, interacts with DnaA modulators region. The interval 70–110 (EPVTLLFAADPALEKPVASKTQTVTPVQSGGETGDQENFHS) is domain II. The segment at 87 to 109 (ASKTQTVTPVQSGGETGDQENFH) is disordered. The segment covering 88-99 (SKTQTVTPVQSG) has biased composition (polar residues). Residues 111–327 (GLDPRYTFDS…GALIRVSAYA (217 aa)) are domain III, AAA+ region. Residues glycine 155, glycine 157, lysine 158, and threonine 159 each coordinate ATP. A domain IV, binds dsDNA region spans residues 328–447 (SLTGKPITMA…LASLKSMLQK (120 aa)).

This sequence belongs to the DnaA family. As to quaternary structure, oligomerizes as a right-handed, spiral filament on DNA at oriC.

The protein localises to the cytoplasm. Plays an essential role in the initiation and regulation of chromosomal replication. ATP-DnaA binds to the origin of replication (oriC) to initiate formation of the DNA replication initiation complex once per cell cycle. Binds the DnaA box (a 9 base pair repeat at the origin) and separates the double-stranded (ds)DNA. Forms a right-handed helical filament on oriC DNA; dsDNA binds to the exterior of the filament while single-stranded (ss)DNA is stabiized in the filament's interior. The ATP-DnaA-oriC complex binds and stabilizes one strand of the AT-rich DNA unwinding element (DUE), permitting loading of DNA polymerase. After initiation quickly degrades to an ADP-DnaA complex that is not apt for DNA replication. Binds acidic phospholipids. The sequence is that of Chromosomal replication initiator protein DnaA from Magnetococcus marinus (strain ATCC BAA-1437 / JCM 17883 / MC-1).